The following is a 403-amino-acid chain: Tyrosine--tRNA ligase (403 aa).

Positions 45-54 match the 'HIGH' region motif; it reads PTAPDLHLGH. Residues 229-233 carry the 'KMSKS' region motif; it reads KMSKS. An ATP-binding site is contributed by Lys232. One can recognise an S4 RNA-binding domain in the interval 341–402; that stretch reads VALCRLLAEA…GKRRFARITF (62 aa).

It belongs to the class-I aminoacyl-tRNA synthetase family. TyrS type 2 subfamily. As to quaternary structure, homodimer.

The protein localises to the cytoplasm. The catalysed reaction is tRNA(Tyr) + L-tyrosine + ATP = L-tyrosyl-tRNA(Tyr) + AMP + diphosphate + H(+). Functionally, catalyzes the attachment of tyrosine to tRNA(Tyr) in a two-step reaction: tyrosine is first activated by ATP to form Tyr-AMP and then transferred to the acceptor end of tRNA(Tyr). In Geobacter sulfurreducens (strain ATCC 51573 / DSM 12127 / PCA), this protein is Tyrosine--tRNA ligase.